Consider the following 430-residue polypeptide: Ribosomal protein uS12 methylthiotransferase RimO (430 aa).

One can recognise an MTTase N-terminal domain in the interval 1 to 116; the sequence is MRVGIKVLGC…IANAIENGTD (116 aa). The [4Fe-4S] cluster site is built by C10, C46, C79, C148, C152, and C155. The region spanning 134-365 is the Radical SAM core domain; the sequence is LEERPYAYVK…LLQAEISNSR (232 aa). Positions 367 to 430 constitute a TRAM domain; it reads DRFVGKKLKF…DEYDMWGSVI (64 aa).

It belongs to the methylthiotransferase family. RimO subfamily. As to quaternary structure, monomer. [4Fe-4S] cluster serves as cofactor.

Its subcellular location is the cytoplasm. The catalysed reaction is L-aspartate(89)-[ribosomal protein uS12]-hydrogen + (sulfur carrier)-SH + AH2 + 2 S-adenosyl-L-methionine = 3-methylsulfanyl-L-aspartate(89)-[ribosomal protein uS12]-hydrogen + (sulfur carrier)-H + 5'-deoxyadenosine + L-methionine + A + S-adenosyl-L-homocysteine + 2 H(+). Catalyzes the methylthiolation of an aspartic acid residue of ribosomal protein uS12. In Thermotoga maritima (strain ATCC 43589 / DSM 3109 / JCM 10099 / NBRC 100826 / MSB8), this protein is Ribosomal protein uS12 methylthiotransferase RimO.